Here is an 89-residue protein sequence, read N- to C-terminus: Small ribosomal subunit protein uS15 (89 aa).

The protein belongs to the universal ribosomal protein uS15 family. In terms of assembly, part of the 30S ribosomal subunit. Forms a bridge to the 50S subunit in the 70S ribosome, contacting the 23S rRNA.

Its function is as follows. One of the primary rRNA binding proteins, it binds directly to 16S rRNA where it helps nucleate assembly of the platform of the 30S subunit by binding and bridging several RNA helices of the 16S rRNA. Forms an intersubunit bridge (bridge B4) with the 23S rRNA of the 50S subunit in the ribosome. The protein is Small ribosomal subunit protein uS15 of Ruegeria sp. (strain TM1040) (Silicibacter sp.).